The sequence spans 172 residues: Small ribosomal subunit protein uS13 (172 aa).

The disordered stretch occupies residues 131–172 (GQRTRTTGRTGVTVGVRRSKAAQAAQQQQKAQASSGGEKKQG). Low complexity predominate over residues 134 to 163 (TRTTGRTGVTVGVRRSKAAQAAQQQQKAQA).

Belongs to the universal ribosomal protein uS13 family. Part of the 30S ribosomal subunit. Forms a loose heterodimer with protein S19. Forms two bridges to the 50S subunit in the 70S ribosome.

Its function is as follows. Located at the top of the head of the 30S subunit, it contacts several helices of the 16S rRNA. In the 70S ribosome it contacts the 23S rRNA (bridge B1a) and protein L5 of the 50S subunit (bridge B1b), connecting the 2 subunits; these bridges are implicated in subunit movement. The protein is Small ribosomal subunit protein uS13 of Sulfurisphaera tokodaii (strain DSM 16993 / JCM 10545 / NBRC 100140 / 7) (Sulfolobus tokodaii).